A 554-amino-acid chain; its full sequence is Glucose-6-phosphate isomerase (554 aa).

Glu359 serves as the catalytic Proton donor. Residues His390 and Lys518 contribute to the active site.

Belongs to the GPI family.

It is found in the cytoplasm. The enzyme catalyses alpha-D-glucose 6-phosphate = beta-D-fructose 6-phosphate. It functions in the pathway carbohydrate biosynthesis; gluconeogenesis. Its pathway is carbohydrate degradation; glycolysis; D-glyceraldehyde 3-phosphate and glycerone phosphate from D-glucose: step 2/4. Functionally, catalyzes the reversible isomerization of glucose-6-phosphate to fructose-6-phosphate. The sequence is that of Glucose-6-phosphate isomerase from Ectopseudomonas mendocina (strain ymp) (Pseudomonas mendocina).